A 493-amino-acid chain; its full sequence is Protein kinase PINOID 2 (493 aa).

The segment at Met-1–Lys-53 is disordered. Positions Ile-27–Asp-44 are enriched in low complexity. The Protein kinase domain maps to Phe-80–Phe-443. Residues Leu-86–Val-94 and Lys-120 each bind ATP. Asp-216 functions as the Proton acceptor in the catalytic mechanism. Positions Gly-295–Gly-306 are enriched in gly residues. 2 disordered regions span residues Gly-295–Pro-320 and Glu-458–Phe-493. Residues Asp-307–Glu-319 show a composition bias toward acidic residues. In terms of domain architecture, AGC-kinase C-terminal spans Lys-444 to Phe-493. The span at Ser-474–Phe-493 shows a compositional bias: basic and acidic residues.

It belongs to the protein kinase superfamily. Ser/Thr protein kinase family.

The enzyme catalyses L-seryl-[protein] + ATP = O-phospho-L-seryl-[protein] + ADP + H(+). It carries out the reaction L-threonyl-[protein] + ATP = O-phospho-L-threonyl-[protein] + ADP + H(+). Serine/threonine-protein kinase involved in the regulation of auxin signaling. In Oryza sativa subsp. japonica (Rice), this protein is Protein kinase PINOID 2 (PID2).